Here is a 347-residue protein sequence, read N- to C-terminus: Quinolinate synthase (347 aa).

Positions 47 and 68 each coordinate iminosuccinate. [4Fe-4S] cluster is bound at residue cysteine 113. Iminosuccinate contacts are provided by residues 139-141 and serine 156; that span reads YAN. Cysteine 200 is a binding site for [4Fe-4S] cluster. Iminosuccinate-binding positions include 226–228 and threonine 243; that span reads HPE. A [4Fe-4S] cluster-binding site is contributed by cysteine 297.

This sequence belongs to the quinolinate synthase family. Type 1 subfamily. [4Fe-4S] cluster is required as a cofactor.

Its subcellular location is the cytoplasm. It catalyses the reaction iminosuccinate + dihydroxyacetone phosphate = quinolinate + phosphate + 2 H2O + H(+). Its pathway is cofactor biosynthesis; NAD(+) biosynthesis; quinolinate from iminoaspartate: step 1/1. Its function is as follows. Catalyzes the condensation of iminoaspartate with dihydroxyacetone phosphate to form quinolinate. The polypeptide is Quinolinate synthase (Shigella boydii serotype 18 (strain CDC 3083-94 / BS512)).